Consider the following 361-residue polypeptide: Histidinol-phosphate aminotransferase (361 aa).

Position 221 is an N6-(pyridoxal phosphate)lysine (Lys221).

This sequence belongs to the class-II pyridoxal-phosphate-dependent aminotransferase family. Histidinol-phosphate aminotransferase subfamily. In terms of assembly, homodimer. Requires pyridoxal 5'-phosphate as cofactor.

It catalyses the reaction L-histidinol phosphate + 2-oxoglutarate = 3-(imidazol-4-yl)-2-oxopropyl phosphate + L-glutamate. Its pathway is amino-acid biosynthesis; L-histidine biosynthesis; L-histidine from 5-phospho-alpha-D-ribose 1-diphosphate: step 7/9. The sequence is that of Histidinol-phosphate aminotransferase from Symbiobacterium thermophilum (strain DSM 24528 / JCM 14929 / IAM 14863 / T).